Consider the following 863-residue polypeptide: DNA replication licensing factor mcm4-B (863 aa).

The segment at 1 to 130 (MSSPTSTPSR…ARKVKQVDLH (130 aa)) is disordered. 2 stretches are compositionally biased toward polar residues: residues 54–64 (SPSGDVQSPSG) and 84–99 (LDLS…SSRV). A C4-type zinc finger spans residues 306 to 331 (CQVCAFTTRVEIDRGRIAEPSVCKHC). The 210-residue stretch at 458-667 (IYERLAAALA…YDRRLAHHLV (210 aa)) folds into the MCM domain. Residues Tyr471, Arg497, Lys516, Ser517, Asn618, Arg643, Arg732, and Glu735 each coordinate ATP. The short motif at 642–645 (SRFD) is the Arginine finger element.

The protein belongs to the MCM family. In terms of assembly, component of the mcm2-7 complex (RLF-M). The complex forms a toroidal hexameric ring with the proposed subunit order mcm2-mcm6-mcm4-mcm7-mcm3-mcm5. The heterodimer of mmcm3/mcm5 interacts with mcm4, mmcm6, mcm7 and weakly with mcm2. Begins to associate with zmcm6 at the neurula stage. Component of the CMG helicase complex, composed of the mcm2-7 complex, the GINS complex and cdc45. Post-translationally, hyperphosphorylated during mitosis in a mechanism requiring cdc2-cyclin B and other kinases. Undergoes dephosphorylation after exiting mitosis, existing in a partially phosphorylated state in the cytosolic interphase mcm complex which associates with the pre-replication complexes (pre-Rcs). Complete dephosphorylation inactivates the mcm complex, preventing its binding to chromatin. Becomes actively phosphorylated during S phase once the mcm complex is assembled on the chromatin. This chromatin-associated phosphorylation occurs during the activation of the pre-Rcs and is independent of cdks. Phosphorylated by the cdc7-dbf4b complex.

The protein localises to the nucleus. Its subcellular location is the chromosome. It catalyses the reaction ATP + H2O = ADP + phosphate + H(+). In terms of biological role, acts as a component of the MCM2-7 complex (MCM complex) which is the replicative helicase essential for 'once per cell cycle' DNA replication initiation and elongation in eukaryotic cells. Core component of CDC45-MCM-GINS (CMG) helicase, the molecular machine that unwinds template DNA during replication, and around which the replisome is built. The active ATPase sites in the MCM2-7 ring are formed through the interaction surfaces of two neighboring subunits such that a critical structure of a conserved arginine finger motif is provided in trans relative to the ATP-binding site of the Walker A box of the adjacent subunit. The six ATPase active sites, however, are likely to contribute differentially to the complex helicase activity. The chain is DNA replication licensing factor mcm4-B (mcm4-b) from Xenopus laevis (African clawed frog).